We begin with the raw amino-acid sequence, 143 residues long: Transcriptional regulator MraZ (143 aa).

2 SpoVT-AbrB domains span residues 5-47 and 76-119; these read TYTP…PKEE and ADEQ…DAQA.

This sequence belongs to the MraZ family. In terms of assembly, forms oligomers.

The protein localises to the cytoplasm. It is found in the nucleoid. The polypeptide is Transcriptional regulator MraZ (Corynebacterium efficiens (strain DSM 44549 / YS-314 / AJ 12310 / JCM 11189 / NBRC 100395)).